Reading from the N-terminus, the 93-residue chain is CRISPR-associated endoribonuclease Cas2 (93 aa).

D13 lines the Mg(2+) pocket.

Belongs to the CRISPR-associated endoribonuclease Cas2 protein family. As to quaternary structure, homodimer, forms a heterotetramer with a Cas1 homodimer. It depends on Mg(2+) as a cofactor.

Its function is as follows. CRISPR (clustered regularly interspaced short palindromic repeat), is an adaptive immune system that provides protection against mobile genetic elements (viruses, transposable elements and conjugative plasmids). CRISPR clusters contain sequences complementary to antecedent mobile elements and target invading nucleic acids. CRISPR clusters are transcribed and processed into CRISPR RNA (crRNA). Functions as a ssRNA-specific endoribonuclease. Involved in the integration of spacer DNA into the CRISPR cassette. The protein is CRISPR-associated endoribonuclease Cas2 of Korarchaeum cryptofilum (strain OPF8).